Here is a 227-residue protein sequence, read N- to C-terminus: Orotidine 5'-phosphate decarboxylase (227 aa).

Residues Asp-8, Lys-30, 58–67 (DLKVHDIPNT), Thr-117, Arg-177, Gln-186, Gly-206, and Arg-207 each bind substrate. The active-site Proton donor is Lys-60.

This sequence belongs to the OMP decarboxylase family. Type 1 subfamily. Homodimer.

It carries out the reaction orotidine 5'-phosphate + H(+) = UMP + CO2. Its pathway is pyrimidine metabolism; UMP biosynthesis via de novo pathway; UMP from orotate: step 2/2. Functionally, catalyzes the decarboxylation of orotidine 5'-monophosphate (OMP) to uridine 5'-monophosphate (UMP). This chain is Orotidine 5'-phosphate decarboxylase, found in Campylobacter fetus subsp. fetus (strain 82-40).